The sequence spans 440 residues: MFPGSGRKTYRQQAPPPGPPNGYQYGPPPGAQGQYPPPQGYPPQGYPPQGYPPQGYAPQGYPPQGYAPQGYAPQGYQQQGGQQQGGQQQGGQQQGGQRQTYATQEAQNFGQGVGNPHPTGPPPSNPQGFGQNSGMTFQYSNCNGKKKALLVGINYTGSKNQLRGCINDVKNMSNFLNQHFGYSYDDMVILTDDQNQRARIPTKENIIRAMQWLVKDARPNDSLVFHYSGHGGVTKDLVGDEESGMDDVIYPLDFEVNGHIIDDIMHDIMVKPLPQGCRLTALYDSCHSGTALDLPYVYSTKGVVKEPNLLKDAGTGAFNALLSYETGNISGAISSLSGIVKKISNSASTNRDQVIRMKASPADVISISGCKDDQTSADAREGGQSTGAMSWSFITTMNQMPNQSYLSLLNNMRTLLKSKYSQKPQLSCSHPQDMNLKFIM.

The interval 1–134 (MFPGSGRKTY…NPQGFGQNSG (134 aa)) is disordered. Residues 14 to 51 (APPPGPPNGYQYGPPPGAQGQYPPPQGYPPQGYPPQGY) are compositionally biased toward pro residues. A compositionally biased stretch (low complexity) spans 52–81 (PPQGYAPQGYPPQGYAPQGYAPQGYQQQGG). The span at 82–94 (QQQGGQQQGGQQQ) shows a compositional bias: gly residues. The span at 98–110 (RQTYATQEAQNFG) shows a compositional bias: polar residues. Active-site residues include His-230 and Cys-286.

The protein belongs to the peptidase C14B family.

In terms of biological role, involved in cell death (apoptosis). The polypeptide is Metacaspase-1 (MCA1) (Debaryomyces hansenii (strain ATCC 36239 / CBS 767 / BCRC 21394 / JCM 1990 / NBRC 0083 / IGC 2968) (Yeast)).